Consider the following 169-residue polypeptide: Disulfide bond formation protein B (169 aa).

The Cytoplasmic segment spans residues 1–14; it reads MNNLTLSLRRERRL. A helical membrane pass occupies residues 15–31; the sequence is LVLLALVCLALLAGALY. Topologically, residues 32–49 are periplasmic; sequence LQYVKNEDPCPLCIIQRY. A disulfide bond links Cys-41 and Cys-44. A helical transmembrane segment spans residues 50–64; sequence FFVLIAVFAFIGAGM. Over 65 to 71 the chain is Cytoplasmic; the sequence is ASGAGVA. Residues 72–89 form a helical membrane-spanning segment; sequence VTEALIVLSAAAGVGTAA. Topologically, residues 90–144 are periplasmic; the sequence is RHLYVQLNPGFSCGFDALQPVVDSLPPARWLPGVFKVAGLCETVYPPIFGILLPG. Residues Cys-102 and Cys-130 are joined by a disulfide bond. The helical transmembrane segment at 145–163 threads the bilayer; sequence WALIAFVLIAVPVAVSLLR. The Cytoplasmic portion of the chain corresponds to 164-169; the sequence is HRGRLR.

The protein belongs to the DsbB family.

The protein resides in the cell inner membrane. Functionally, required for disulfide bond formation in some periplasmic proteins. Acts by oxidizing the DsbA protein. In Burkholderia mallei (strain ATCC 23344), this protein is Disulfide bond formation protein B.